A 198-amino-acid polypeptide reads, in one-letter code: Ciliary neurotrophic factor (198 aa).

This sequence belongs to the CNTF family. As to expression, nervous system.

The protein localises to the cytoplasm. Its function is as follows. CNTF is a survival factor for various neuronal cell types. Seems to prevent the degeneration of motor axons after axotomy. The polypeptide is Ciliary neurotrophic factor (Cntf) (Mus musculus (Mouse)).